A 631-amino-acid chain; its full sequence is tRNA uridine 5-carboxymethylaminomethyl modification enzyme MnmG (631 aa).

15–20 contacts FAD; it reads GAGHAG. Residues 214 to 233 form a disordered region; the sequence is YSKTEEEPGDKEPRHFSFTS. Residue 276-290 coordinates NAD(+); the sequence is GPRYCPSIETKVVRF.

It belongs to the MnmG family. In terms of assembly, homodimer. Heterotetramer of two MnmE and two MnmG subunits. The cofactor is FAD.

The protein localises to the cytoplasm. In terms of biological role, NAD-binding protein involved in the addition of a carboxymethylaminomethyl (cmnm) group at the wobble position (U34) of certain tRNAs, forming tRNA-cmnm(5)s(2)U34. This Lactobacillus delbrueckii subsp. bulgaricus (strain ATCC 11842 / DSM 20081 / BCRC 10696 / JCM 1002 / NBRC 13953 / NCIMB 11778 / NCTC 12712 / WDCM 00102 / Lb 14) protein is tRNA uridine 5-carboxymethylaminomethyl modification enzyme MnmG.